The primary structure comprises 2210 residues: Filamin-A (2210 aa).

Calponin-homology (CH) domains are found at residues 15–120 (KIQQ…LHYS) and 139–242 (HTPK…NSKL). Filamin repeat units lie at residues 249 to 347 (RPKT…PVKV), 349 to 447 (GHAG…PVKV), 448 to 544 (APLS…EVKV), 545 to 635 (GPKK…IAQI), 638 to 734 (RTDF…RVYV), 735 to 831 (GVPV…VVVE), 832 to 929 (QTVD…VVNV), 930 to 1022 (KSGC…RVLV), 1023 to 1121 (EETV…VMTV), 1122 to 1217 (FPKS…KLEA), 1218 to 1312 (FPTG…SIKA), 1322 to 1423 (SEYI…KFHV), 1424 to 1515 (DSIT…FAKI), 1516 to 1603 (TGEG…KVTV), 1606 to 1698 (REVG…TVKV), 1699 to 1796 (AGEG…QFTV), 1799 to 1891 (LRDS…KVYV), 1893 to 1986 (PDAG…RIKV), 1988 to 2079 (KDVA…KVNA), and 2116 to 2210 (TFKS…QIDV).

This sequence belongs to the filamin family. Interacts with Ten-m. Germline-specific in females (at protein level). Expressed in ovary.

The protein localises to the cytoplasm. It is found in the cytoskeleton. The protein resides in the cell membrane. Its function is as follows. Involved in the germline ring canal formation. May tether actin microfilament within the ovarian ring canal to the cell membrane. Contributes to actin microfilaments organization. The sequence is that of Filamin-A (cher) from Drosophila melanogaster (Fruit fly).